The following is a 2510-amino-acid chain: Highly reducing polyketide synthase g433 (2510 aa).

The tract at residues M1–H54 is disordered. The segment covering N22–S45 has biased composition (low complexity). The region spanning D58–S477 is the Ketosynthase family 3 (KS3) domain. Catalysis depends on for beta-ketoacyl synthase activity residues C229, H365, and H400. The interval F574 to D880 is malonyl-CoA:ACP transacylase (MAT) domain. Residues H942–S1070 form an N-terminal hotdog fold region. The interval H942–D1226 is dehydratase (DH) domain. The PKS/mFAS DH domain maps to H942–G1229. H974 acts as the Proton acceptor; for dehydratase activity in catalysis. The interval P1083–G1229 is C-terminal hotdog fold. D1144 acts as the Proton donor; for dehydratase activity in catalysis. The interval D1395–D1574 is methyltransferase (CMet) domain. Residues G1787–I2097 are enoyl reductase (ER) (ER) domain. Residues S2122 to E2296 are ketoreductase (KR) domain. The region spanning S2419–L2496 is the Carrier domain. Position 2456 is an O-(pantetheine 4'-phosphoryl)serine (S2456).

Its pathway is mycotoxin biosynthesis. Its function is as follows. Highly reducing polyketide synthase; part of the gene cluster that mediates the biosynthesis of 1233A, a natural compound known as an inhibitor of HMG-CoA synthase in the mevalonate pathway and with antibacterial and antifungal activities. The highly reducing polyketide synthase g433 gene is responsible for the 1233A backbone biosynthesis and the cytochrome P450 monooxygenase g430 catalyzes oxidation of the backbone. This is Highly reducing polyketide synthase g433 from Fusarium sp.